Reading from the N-terminus, the 662-residue chain is DCC-interacting protein 13-beta (662 aa).

The tract at residues 1–428 (MPAVDKLLLE…NSDIEDDNIV (428 aa)) is required for RAB5A binding. A BAR domain is found at 3 to 268 (AVDKLLLEEA…ESVYTPDIDV (266 aa)). In terms of domain architecture, PH spans 277 to 375 (LIQKTGYLNL…WICAVNNISR (99 aa)). Residues 486 to 635 (SLLQQMFIVR…LMLSVPLTND (150 aa)) enclose the PID domain. Residues 642-662 (NDQADDTGGSPSENRGAESEA) form a disordered region.

Homodimer. Homotetramer. Binds RAB5A/Rab5 through an N-terminal domain. This interaction is essential for its recruitment to endosomal membranes as well as its role in cell proliferation. Binds subunits of the NuRD/MeCP1 complex. Interacts with FSHR; interaction is independent of follicle stimulating hormone stimulation. Interacts with APPL1; the interaction is decreased by adiponectin in a time-dependent manner. Forms a complex comprising APPL1, RUVBL2, CTNNB1, HDAC1 and HDAC2; interaction reduces interaction between CTNNB1, HDAC1, HDAC2 and RUVBL2 leading to the decrease of deacetylase activity of this complex; affects the recruitment of repressive complexes to the Wnt target genes. Interacts (via BAR domain) with TBC1D1; interaction is dependent of TBC1D1 phosphorylation at 'Ser-235'; interaction diminishes the phosphorylation of TBC1D1 at 'Thr-596', resulting in inhibition of SLC2A4 translocation and glucose uptake. Interacts with ANXA2; targets APPL2 to endosomes and acting in parallel to RAB5A. Interacts with RAB31 (in GTP-bound form); interaction contributes to or enhances recruitment of APPL2 to the phagosomes; interaction enhances Fc-gamma receptor-mediated phagocytosis through PI3K/Akt signaling in macrophages. Interacts with PIK3R1; forms a complex with PIK3R1 and APPL1. Interacts (via BAR domain) with ADIPOR1; hinders the accessibility of APPL1 to ADIPOR1; negatively regulates adiponectin signaling; ADIPOQ dissociates this interaction and facilitates the recruitment of APPL1 to ADIPOR1. Interacts (via BAR domain) with ADIPOR2; ADIPOQ dissociates this interaction. In terms of tissue distribution, expressed in insulin-target tissues including skeletal muscle, liver, fat, and brain. Highly expressed in kidney and pancreas. Abundantly expressed in the ventromedial hypothalamus (VMH), barely detectable in the arcuate nucleus (ARC) and paraventricular nucleus (PVN) of the hypothalamus. Also expressed in pancreatic beta-cells.

The protein resides in the early endosome membrane. It is found in the nucleus. It localises to the cell membrane. Its subcellular location is the endosome membrane. The protein localises to the cytoplasm. The protein resides in the cytoplasmic vesicle. It is found in the phagosome. It localises to the cell projection. Its subcellular location is the ruffle. The protein localises to the ruffle membrane. The protein resides in the phagosome membrane. In terms of biological role, multifunctional adapter protein that binds to various membrane receptors, nuclear factors and signaling proteins to regulate many processes, such as cell proliferation, immune response, endosomal trafficking and cell metabolism. Regulates signaling pathway leading to cell proliferation through interaction with RAB5A and subunits of the NuRD/MeCP1 complex. Plays a role in immune response by modulating phagocytosis, inflammatory and innate immune responses. In macrophages, enhances Fc-gamma receptor-mediated phagocytosis through interaction with RAB31 leading to activation of PI3K/Akt signaling. In response to LPS, modulates inflammatory responses by playing a key role on the regulation of TLR4 signaling and in the nuclear translocation of RELA/NF-kappa-B p65 and the secretion of pro- and anti-inflammatory cytokines. Also functions as a negative regulator of innate immune response via inhibition of AKT1 signaling pathway by forming a complex with APPL1 and PIK3R1. Plays a role in endosomal trafficking of TGFBR1 from the endosomes to the nucleus. Plays a role in cell metabolism by regulating adiponectin and insulin signaling pathways and adaptative thermogenesis. In muscle, negatively regulates adiponectin-simulated glucose uptake and fatty acid oxidation by inhibiting adiponectin signaling pathway through APPL1 sequestration thereby antagonizing APPL1 action. In muscles, negatively regulates insulin-induced plasma membrane recruitment of GLUT4 and glucose uptake through interaction with TBC1D1. Plays a role in cold and diet-induced adaptive thermogenesis by activating ventromedial hypothalamus (VMH) neurons throught AMPK inhibition which enhances sympathetic outflow to subcutaneous white adipose tissue (sWAT), sWAT beiging and cold tolerance. Also plays a role in other signaling pathways namely Wnt/beta-catenin, HGF and glucocorticoid receptor signaling. Positive regulator of beta-catenin/TCF-dependent transcription through direct interaction with RUVBL2/reptin resulting in the relief of RUVBL2-mediated repression of beta-catenin/TCF target genes by modulating the interactions within the beta-catenin-reptin-HDAC complex. May affect adult neurogenesis in hippocampus and olfactory system via regulating the sensitivity of glucocorticoid receptor. Required for fibroblast migration through HGF cell signaling. This is DCC-interacting protein 13-beta from Mus musculus (Mouse).